Reading from the N-terminus, the 217-residue chain is GrpE protein homolog 1, mitochondrial (217 aa).

A mitochondrion-targeting transit peptide spans 1–27 (MAARCVRLARRSLPALALSFRPSPRLL). Residue lysine 94 is modified to N6-acetyllysine; alternate. Position 94 is an N6-succinyllysine; alternate (lysine 94). Lysine 100 is subject to N6-acetyllysine. Lysine 120 carries the post-translational modification N6-succinyllysine. At lysine 215 the chain carries N6-acetyllysine; alternate. Position 215 is an N6-succinyllysine; alternate (lysine 215).

It belongs to the GrpE family. As to quaternary structure, probable component of the PAM complex at least composed of a mitochondrial HSP70 protein, GRPEL1 or GRPEL2, TIMM44, TIMM16/PAM16 and TIMM14/DNAJC19. Binds to HSP70, HSC70 and HSJ1B. As to expression, ubiquitous. Particularly abundant in heart, kidney and liver.

Its subcellular location is the mitochondrion matrix. Its function is as follows. Essential component of the PAM complex, a complex required for the translocation of transit peptide-containing proteins from the inner membrane into the mitochondrial matrix in an ATP-dependent manner. Seems to control the nucleotide-dependent binding of mitochondrial HSP70 to substrate proteins. This chain is GrpE protein homolog 1, mitochondrial (Grpel1), found in Rattus norvegicus (Rat).